We begin with the raw amino-acid sequence, 352 residues long: MLELNFSQTLGNHCLTINETLPANGITAIFGVSGAGKTSLINAISGLTRPQKGRIVLNGRVLNDAEKGICLSPEKRRVGYVFQDARLFPHYKVRGNLRYGMAKSMVNQFDKLVALLGIEPLLDRLPGSLSGGEKQRVAIGRALLTAPELLLLDEPLASLDIPRKRELLPYLQRLTREINIPMLYVSHSLDEILHLADRVMVLENGQVKAFGALEEVWGSSVMNPWLPKEQQSSILKVTVLEHHPHYAMTALALGDQHLWVNKLDEPLQAALRIRIQASDVSLVLQPPQQTSIRNVLRAKVVNSYDDNGQVEVELEVGGKTLWARISPWARDELAIKPGLWLYAQIKSVSITA.

One can recognise an ABC transporter domain in the interval 1–229 (MLELNFSQTL…SVMNPWLPKE (229 aa)). ATP is bound at residue 31–38 (GVSGAGKT). The Mop domain occupies 289–352 (QTSIRNVLRA…AQIKSVSITA (64 aa)).

Belongs to the ABC transporter superfamily. Molybdate importer (TC 3.A.1.8) family. In terms of assembly, the complex is composed of two ATP-binding proteins (ModC), two transmembrane proteins (ModB) and a solute-binding protein (ModA).

It is found in the cell inner membrane. It carries out the reaction molybdate(out) + ATP + H2O = molybdate(in) + ADP + phosphate + H(+). Part of the ABC transporter complex ModABC involved in molybdenum import. Responsible for energy coupling to the transport system. This chain is Molybdenum import ATP-binding protein ModC, found in Escherichia coli O6:K15:H31 (strain 536 / UPEC).